We begin with the raw amino-acid sequence, 904 residues long: Phosphoenolpyruvate carboxylase (904 aa).

Residues H151 and K570 contribute to the active site.

Belongs to the PEPCase type 1 family. The cofactor is Mg(2+).

The enzyme catalyses oxaloacetate + phosphate = phosphoenolpyruvate + hydrogencarbonate. Functionally, forms oxaloacetate, a four-carbon dicarboxylic acid source for the tricarboxylic acid cycle. This chain is Phosphoenolpyruvate carboxylase, found in Xanthomonas campestris pv. campestris (strain 8004).